The primary structure comprises 478 residues: MAHVPARTSPGPGPQLLLLLLPLFLLLLRDVAGSHRAPAWSALPAAADGLQGDRDLQRHPGDAAATLGPSAQDMVAVHMHRLYEKYSRQGARPGGGNTVRSFRARLEVVDQKAVYFFNLTSMQDSEMILTATFHFYSEPPRWPRALEVLCKPRAKNASGRPLPLGPPTRQHLLFRSLSQNTATQGLLRGAMALAPPPRGLWQAKDISPIVKAARRDGELLLSAQLDSEERDPGVPRPSPYAPYILVYANDLAISEPNSVAVTLQRYDPFPAGDPEPRAAPNNSADPRVRRAAQATGPLQDNELPGLDERPPRAHAQHFHKHQLWPSPFRALKPRPGRKDRRKKGQEVFMAASQVLDFDEKTMQKARRKQWDEPRVCSRRYLKVDFADIGWNEWIISPKSFDAYYCAGACEFPMPKIVRPSNHATIQSIVRAVGIIPGIPEPCCVPDKMNSLGVLFLDENRNVVLKVYPNMSVDTCACR.

The first 33 residues, methionine 1 to glycine 33, serve as a signal peptide directing secretion. Residues serine 34–lysine 368 constitute a propeptide that is removed on maturation. N-linked (GlcNAc...) asparagine glycans are attached at residues asparagine 118, asparagine 156, and asparagine 281. The tract at residues tyrosine 266 to histidine 319 is disordered. 3 disulfides stabilise this stretch: cysteine 376–cysteine 443, cysteine 405–cysteine 475, and cysteine 409–cysteine 477. N-linked (GlcNAc...) asparagine glycosylation is present at asparagine 469.

Belongs to the TGF-beta family. As to quaternary structure, homodimer or heterodimer. Can form a non-covalent complex of the mature region and the pro-region. As to expression, expressed in femur, brain, lung, skeletal muscle, pancreas and testis.

The protein resides in the secreted. In terms of biological role, growth factor involved in osteogenesis and adipogenesis. Plays an inhibitory role in the process of osteoblast differentiation via SMAD2/3 pathway. Plays an inhibitory role in the process of adipogenesis. The protein is Growth/differentiation factor 10 of Homo sapiens (Human).